The primary structure comprises 436 residues: Glutamyl-tRNA reductase (436 aa).

Residues 56 to 59 (TCNR), serine 114, 119 to 121 (EAQ), and glutamine 125 contribute to the substrate site. Cysteine 57 serves as the catalytic Nucleophile. 194-199 (GAGEMI) is a binding site for NADP(+).

The protein belongs to the glutamyl-tRNA reductase family. Homodimer.

The enzyme catalyses (S)-4-amino-5-oxopentanoate + tRNA(Glu) + NADP(+) = L-glutamyl-tRNA(Glu) + NADPH + H(+). Its pathway is porphyrin-containing compound metabolism; protoporphyrin-IX biosynthesis; 5-aminolevulinate from L-glutamyl-tRNA(Glu): step 1/2. Functionally, catalyzes the NADPH-dependent reduction of glutamyl-tRNA(Glu) to glutamate 1-semialdehyde (GSA). This Acidovorax sp. (strain JS42) protein is Glutamyl-tRNA reductase.